Reading from the N-terminus, the 437-residue chain is Putative ABC transporter ATP-binding protein CTC_00753 (437 aa).

2 ABC transporter domains span residues 1–143 (MERE…LPTI) and 179–416 (LKFK…QISK). Position 219–226 (219–226 (GENGAGKS)) interacts with ATP.

It belongs to the ABC transporter superfamily.

It is found in the cell membrane. Probably part of an ABC transporter complex. Responsible for energy coupling to the transport system. This Clostridium tetani (strain Massachusetts / E88) protein is Putative ABC transporter ATP-binding protein CTC_00753.